We begin with the raw amino-acid sequence, 276 residues long: Formamidopyrimidine-DNA glycosylase (276 aa).

The active-site Schiff-base intermediate with DNA is the Pro2. Catalysis depends on Glu3, which acts as the Proton donor. Lys60 serves as the catalytic Proton donor; for beta-elimination activity. 2 residues coordinate DNA: His93 and Arg112. The FPG-type zinc-finger motif lies at 240-274 (NVYGKKGEPCVTCGTILEKTVVGGRGTHYCPICQP). Arg264 serves as the catalytic Proton donor; for delta-elimination activity.

It belongs to the FPG family. In terms of assembly, monomer. Zn(2+) serves as cofactor.

It carries out the reaction Hydrolysis of DNA containing ring-opened 7-methylguanine residues, releasing 2,6-diamino-4-hydroxy-5-(N-methyl)formamidopyrimidine.. The enzyme catalyses 2'-deoxyribonucleotide-(2'-deoxyribose 5'-phosphate)-2'-deoxyribonucleotide-DNA = a 3'-end 2'-deoxyribonucleotide-(2,3-dehydro-2,3-deoxyribose 5'-phosphate)-DNA + a 5'-end 5'-phospho-2'-deoxyribonucleoside-DNA + H(+). Functionally, involved in base excision repair of DNA damaged by oxidation or by mutagenic agents. Acts as a DNA glycosylase that recognizes and removes damaged bases. Has a preference for oxidized purines, such as 7,8-dihydro-8-oxoguanine (8-oxoG). Has AP (apurinic/apyrimidinic) lyase activity and introduces nicks in the DNA strand. Cleaves the DNA backbone by beta-delta elimination to generate a single-strand break at the site of the removed base with both 3'- and 5'-phosphates. This chain is Formamidopyrimidine-DNA glycosylase, found in Bacillus anthracis.